We begin with the raw amino-acid sequence, 374 residues long: Small ribosomal subunit protein uS4m (374 aa).

Residues 259–323 (GRLENFLMRL…KKLYFFIKSK (65 aa)) form the S4 RNA-binding domain.

It belongs to the universal ribosomal protein uS4 family.

It is found in the mitochondrion. This chain is Small ribosomal subunit protein uS4m (RPS4), found in Acanthamoeba castellanii (Amoeba).